A 370-amino-acid polypeptide reads, in one-letter code: Pantothenate kinase 3 (370 aa).

The active-site Proton acceptor is the glutamate 138. Acetyl-CoA-binding residues include serine 192, serine 195, and arginine 207.

The protein belongs to the type II pantothenate kinase family. In terms of assembly, homodimer.

The protein localises to the cytoplasm. The enzyme catalyses (R)-pantothenate + ATP = (R)-4'-phosphopantothenate + ADP + H(+). It participates in cofactor biosynthesis; coenzyme A biosynthesis; CoA from (R)-pantothenate: step 1/5. With respect to regulation, subject to allosteric regulation, exists in two distinct conformational states, a catalytically incompetent (or open) conformation stabilized by the binding of acetyl(acyl)-CoA, and a catalytically competent (or closed) conformation stabilized by ATP-binding. Inhibited by acetyl-CoA and its thioesters which act as allosteric inhibitors and compete with the ATP-binding site. In terms of biological role, catalyzes the phosphorylation of pantothenate to generate 4'-phosphopantothenate in the first and rate-determining step of coenzyme A (CoA) synthesis. This Bos taurus (Bovine) protein is Pantothenate kinase 3 (PANK3).